The following is a 265-amino-acid chain: Mlc titration factor A (265 aa).

Zn(2+) contacts are provided by H111, H148, H152, and E211.

It belongs to the MtfA family. As to quaternary structure, interacts with Mlc. Zn(2+) serves as cofactor.

The protein resides in the cytoplasm. In terms of biological role, involved in the modulation of the activity of the glucose-phosphotransferase system (glucose-PTS). Interacts with the transcriptional repressor Mlc, preventing its interaction with DNA and leading to the modulation of expression of genes regulated by Mlc, including ptsG, which encodes the PTS system glucose-specific EIICB component. Shows zinc-dependent metallopeptidase activity. The polypeptide is Mlc titration factor A (Escherichia coli O139:H28 (strain E24377A / ETEC)).